We begin with the raw amino-acid sequence, 136 residues long: Holo-[acyl-carrier-protein] synthase (136 aa).

Mg(2+) is bound by residues D8 and E58.

Belongs to the P-Pant transferase superfamily. AcpS family. It depends on Mg(2+) as a cofactor.

It is found in the cytoplasm. It catalyses the reaction apo-[ACP] + CoA = holo-[ACP] + adenosine 3',5'-bisphosphate + H(+). Its function is as follows. Transfers the 4'-phosphopantetheine moiety from coenzyme A to a Ser of acyl-carrier-protein. This Leuconostoc mesenteroides subsp. mesenteroides (strain ATCC 8293 / DSM 20343 / BCRC 11652 / CCM 1803 / JCM 6124 / NCDO 523 / NBRC 100496 / NCIMB 8023 / NCTC 12954 / NRRL B-1118 / 37Y) protein is Holo-[acyl-carrier-protein] synthase.